A 254-amino-acid polypeptide reads, in one-letter code: MAKKIEYKDLLDAGVHFGHLTRKWNPKMAPYIFMEKNGIHLIDLNKTLVCLDEANAALKTIVRSGRKVLFVATKKQAQEVVTAEAKRLKMPYATERWLGGMLTNFATVRKSLKKMSSMEKMMKDEAFSSLNKKERLVLSREKEKLEKVLGGIADLTRLPAAIFVVDVKKEHIAIAEAKKLGIPVFAIVDTNSDPTIVDFPIPANDDAFKSISILTQAIGQGIEDALSERKREKDDAKLKEDEESKKASDKAEIQ.

Residues A225 to Q254 form a disordered region. Over residues L226–Q254 the composition is skewed to basic and acidic residues.

The protein belongs to the universal ribosomal protein uS2 family.

This is Small ribosomal subunit protein uS2 from Cytophaga hutchinsonii (strain ATCC 33406 / DSM 1761 / CIP 103989 / NBRC 15051 / NCIMB 9469 / D465).